The chain runs to 226 residues: Leucyl/phenylalanyl-tRNA--protein transferase (226 aa).

Belongs to the L/F-transferase family.

It is found in the cytoplasm. It catalyses the reaction N-terminal L-lysyl-[protein] + L-leucyl-tRNA(Leu) = N-terminal L-leucyl-L-lysyl-[protein] + tRNA(Leu) + H(+). The enzyme catalyses N-terminal L-arginyl-[protein] + L-leucyl-tRNA(Leu) = N-terminal L-leucyl-L-arginyl-[protein] + tRNA(Leu) + H(+). The catalysed reaction is L-phenylalanyl-tRNA(Phe) + an N-terminal L-alpha-aminoacyl-[protein] = an N-terminal L-phenylalanyl-L-alpha-aminoacyl-[protein] + tRNA(Phe). Functions in the N-end rule pathway of protein degradation where it conjugates Leu, Phe and, less efficiently, Met from aminoacyl-tRNAs to the N-termini of proteins containing an N-terminal arginine or lysine. The protein is Leucyl/phenylalanyl-tRNA--protein transferase of Pseudomonas paraeruginosa (strain DSM 24068 / PA7) (Pseudomonas aeruginosa (strain PA7)).